Consider the following 111-residue polypeptide: WAP four-disulfide core domain protein 12 (111 aa).

The N-terminal stretch at 1–23 is a signal peptide; it reads MGSSSFLVLMVSLALVTLVAAEG. Residues 27-74 form the WAP domain; the sequence is GIEKAGVCPADNIRCFKSDPPQCHTDQDCLGERKCCYLHCGFKCVIPV. 4 disulfides stabilise this stretch: cysteine 34-cysteine 62, cysteine 41-cysteine 66, cysteine 49-cysteine 61, and cysteine 55-cysteine 70. Residues 80–111 are disordered; the sequence is GGNKDEDVSGPCPEPGWEAKSPGSSSTGCPQK. The span at 101 to 111 shows a compositional bias: polar residues; it reads PGSSSTGCPQK.

The protein localises to the secreted. Its function is as follows. Antibacterial protein. Putative acid-stable proteinase inhibitor. This Macaca mulatta (Rhesus macaque) protein is WAP four-disulfide core domain protein 12 (WFDC12).